Consider the following 322-residue polypeptide: MTLEQKGLKKQSITVAYFFDTIGKEHDIKLRRLNSVDEQKRRIFERDLHRPGLALAGFTNLFTYKRVQILGNTEMRFLNQHEEDARKNAFGNFVRFKIPCIILTSTNKLQPELLAMATEAGIPVFSTRHSSTKTMYLITEFLDNQFSLYQQYHGSMVDVYGVGVLLKGRSGLGKSEVALDLVERGHGLVADDVVVIHRKGESMILTAKRNKNIEHFMEIRGLGVVDVKANFGIRAIRDAKEVQVVVELLEWNKEMEYERLGLDTKTTKILGVEVPLVQLPIFPGKNITVIIEVVALNFLLKHYYDYVPAEALTKRIRTAIDQ.

Catalysis depends on residues His-153 and Lys-174. 168-175 is an ATP binding site; that stretch reads GRSGLGKS. Ser-175 lines the Mg(2+) pocket. Asp-192 functions as the Proton acceptor; for phosphorylation activity. Proton donor; for dephosphorylation activity in the catalytic mechanism. Residues 217–226 are important for the catalytic mechanism of both phosphorylation and dephosphorylation; that stretch reads MEIRGLGVVD. Glu-218 is a Mg(2+) binding site. Arg-259 is a catalytic residue. An important for the catalytic mechanism of dephosphorylation region spans residues 280–285; sequence PIFPGK.

The protein belongs to the HPrK/P family. Homohexamer. Mg(2+) is required as a cofactor.

It carries out the reaction [HPr protein]-L-serine + ATP = [HPr protein]-O-phospho-L-serine + ADP + H(+). It catalyses the reaction [HPr protein]-O-phospho-L-serine + phosphate + H(+) = [HPr protein]-L-serine + diphosphate. Catalyzes the ATP- as well as the pyrophosphate-dependent phosphorylation of a specific serine residue in HPr, a phosphocarrier protein of the phosphoenolpyruvate-dependent sugar phosphotransferase system (PTS). HprK/P also catalyzes the pyrophosphate-producing, inorganic phosphate-dependent dephosphorylation (phosphorolysis) of seryl-phosphorylated HPr (P-Ser-HPr). The chain is HPr kinase/phosphorylase from Chlorobium phaeobacteroides (strain DSM 266 / SMG 266 / 2430).